We begin with the raw amino-acid sequence, 506 residues long: Lysine--tRNA ligase (506 aa).

Mg(2+)-binding residues include Glu-416 and Glu-423.

Belongs to the class-II aminoacyl-tRNA synthetase family. In terms of assembly, homodimer. Mg(2+) is required as a cofactor.

Its subcellular location is the cytoplasm. The catalysed reaction is tRNA(Lys) + L-lysine + ATP = L-lysyl-tRNA(Lys) + AMP + diphosphate. The sequence is that of Lysine--tRNA ligase from Bordetella bronchiseptica (strain ATCC BAA-588 / NCTC 13252 / RB50) (Alcaligenes bronchisepticus).